The primary structure comprises 266 residues: Regulatory protein RecX (266 aa).

This sequence belongs to the RecX family.

The protein localises to the cytoplasm. Modulates RecA activity. This is Regulatory protein RecX from Enterococcus faecalis (strain ATCC 700802 / V583).